Reading from the N-terminus, the 126-residue chain is Aspartate 1-decarboxylase (126 aa).

Serine 25 acts as the Schiff-base intermediate with substrate; via pyruvic acid in catalysis. The residue at position 25 (serine 25) is a Pyruvic acid (Ser). Threonine 57 is a substrate binding site. Tyrosine 58 serves as the catalytic Proton donor. 73–75 lines the substrate pocket; sequence GAA.

Belongs to the PanD family. As to quaternary structure, heterooctamer of four alpha and four beta subunits. The cofactor is pyruvate. In terms of processing, is synthesized initially as an inactive proenzyme, which is activated by self-cleavage at a specific serine bond to produce a beta-subunit with a hydroxyl group at its C-terminus and an alpha-subunit with a pyruvoyl group at its N-terminus.

The protein resides in the cytoplasm. The catalysed reaction is L-aspartate + H(+) = beta-alanine + CO2. The protein operates within cofactor biosynthesis; (R)-pantothenate biosynthesis; beta-alanine from L-aspartate: step 1/1. Functionally, catalyzes the pyruvoyl-dependent decarboxylation of aspartate to produce beta-alanine. The sequence is that of Aspartate 1-decarboxylase from Yersinia pseudotuberculosis serotype IB (strain PB1/+).